The primary structure comprises 143 residues: Ribonuclease P protein component 2 (143 aa).

The protein belongs to the eukaryotic/archaeal RNase P protein component 2 family. As to quaternary structure, consists of a catalytic RNA component and at least 4-5 protein subunits.

It localises to the cytoplasm. The catalysed reaction is Endonucleolytic cleavage of RNA, removing 5'-extranucleotides from tRNA precursor.. Part of ribonuclease P, a protein complex that generates mature tRNA molecules by cleaving their 5'-ends. This chain is Ribonuclease P protein component 2, found in Saccharolobus solfataricus (strain ATCC 35092 / DSM 1617 / JCM 11322 / P2) (Sulfolobus solfataricus).